The primary structure comprises 122 residues: Large ribosomal subunit protein uL18 (122 aa).

This sequence belongs to the universal ribosomal protein uL18 family. Part of the 50S ribosomal subunit; part of the 5S rRNA/L5/L18/L25 subcomplex. Contacts the 5S and 23S rRNAs.

Its function is as follows. This is one of the proteins that bind and probably mediate the attachment of the 5S RNA into the large ribosomal subunit, where it forms part of the central protuberance. The sequence is that of Large ribosomal subunit protein uL18 from Prochlorococcus marinus (strain MIT 9301).